The chain runs to 261 residues: MSKISPLAIIEDGAVIGKDVEIGAYCIISSDSTIGDGTKIEQNSCIYGKTTIGKNNHIFSHAVIGSAPQDLKFAGEDVELIIGDNNKIREFTLFNPGTKGGGGKTIIGSHNLFMGYVHIGHDVIIGNHCILANAATLAGHVEMGDYAVIGGMTPIHQFVHIGEYAMVAGASALAQDVPPFCMAEGNRATLRGLNLTGLRRNIEREEIDEIKSAYKELFEAGKPLKDVANEILEHTSSHHVQSLCNFVLKTKRGIPYERKHL.

This sequence belongs to the transferase hexapeptide repeat family. LpxA subfamily. As to quaternary structure, homotrimer.

It localises to the cytoplasm. It carries out the reaction a (3R)-hydroxyacyl-[ACP] + UDP-N-acetyl-alpha-D-glucosamine = a UDP-3-O-[(3R)-3-hydroxyacyl]-N-acetyl-alpha-D-glucosamine + holo-[ACP]. The protein operates within glycolipid biosynthesis; lipid IV(A) biosynthesis; lipid IV(A) from (3R)-3-hydroxytetradecanoyl-[acyl-carrier-protein] and UDP-N-acetyl-alpha-D-glucosamine: step 1/6. Its function is as follows. Involved in the biosynthesis of lipid A, a phosphorylated glycolipid that anchors the lipopolysaccharide to the outer membrane of the cell. This chain is Acyl-[acyl-carrier-protein]--UDP-N-acetylglucosamine O-acyltransferase, found in Sulfurimonas denitrificans (strain ATCC 33889 / DSM 1251) (Thiomicrospira denitrificans (strain ATCC 33889 / DSM 1251)).